Here is a 185-residue protein sequence, read N- to C-terminus: Putative F-box protein At3g17400 (185 aa).

The 47-residue stretch at 1-47 (MMTLSDLPSDLAEEVLSKIPVTSLRGVRATCKKWNTLSKDRSFTRKH) folds into the F-box domain.

The polypeptide is Putative F-box protein At3g17400 (Arabidopsis thaliana (Mouse-ear cress)).